We begin with the raw amino-acid sequence, 64 residues long: U2-aranetoxin-Av1a (64 aa).

Expressed in fat body, but not in cephalothorax, silk gland, midgut.

Its function is as follows. Insecticidal toxin. In Araneus ventricosus (Orbweaver spider), this protein is U2-aranetoxin-Av1a.